Reading from the N-terminus, the 230-residue chain is Phosphoribosylaminoimidazole-succinocarboxamide synthase (230 aa).

Belongs to the SAICAR synthetase family.

It catalyses the reaction 5-amino-1-(5-phospho-D-ribosyl)imidazole-4-carboxylate + L-aspartate + ATP = (2S)-2-[5-amino-1-(5-phospho-beta-D-ribosyl)imidazole-4-carboxamido]succinate + ADP + phosphate + 2 H(+). It participates in purine metabolism; IMP biosynthesis via de novo pathway; 5-amino-1-(5-phospho-D-ribosyl)imidazole-4-carboxamide from 5-amino-1-(5-phospho-D-ribosyl)imidazole-4-carboxylate: step 1/2. The polypeptide is Phosphoribosylaminoimidazole-succinocarboxamide synthase (Thermotoga sp. (strain RQ2)).